We begin with the raw amino-acid sequence, 152 residues long: Small ribosomal subunit protein uS15 (152 aa).

The tract at residues methionine 1 to serine 20 is disordered.

It belongs to the universal ribosomal protein uS15 family. As to quaternary structure, part of the 30S ribosomal subunit.

This chain is Small ribosomal subunit protein uS15, found in Metallosphaera sedula (strain ATCC 51363 / DSM 5348 / JCM 9185 / NBRC 15509 / TH2).